We begin with the raw amino-acid sequence, 1000 residues long: Chromosome transmission fidelity protein 18 homolog (1000 aa).

Disordered stretches follow at residues 53–89, 130–159, and 272–301; these read SAGDPIRSNANSKPTGDSNGEALACIDTSKSKKRDAS, AGNSTALSDDITPPPSPNHSPKKNERDSKF, and EFGENDSEILENDDNAGEEDDEDEPSSHSL. Residues 60 to 70 are compositionally biased toward polar residues; sequence SNANSKPTGDS. Acidic residues predominate over residues 272–295; sequence EFGENDSEILENDDNAGEEDDEDE. Residue 396 to 403 participates in ATP binding; the sequence is GPPGLGKT. A compositionally biased stretch (polar residues) spans 888-898; that stretch reads ARNAGRDNTTA. Residues 888-916 are disordered; that stretch reads ARNAGRDNTTAAAAVKTADPKGAKSAAKP.

This sequence belongs to the activator 1 small subunits family. CTF18 subfamily. Component of the CTF18-RFC complex, which consists of ctf18, ctf8, dcc1, rfc2, rfc3, rfc4 and rfc5. The CTF18-RFC complex associates with pcna.

The protein localises to the nucleus. Its function is as follows. Chromosome cohesion factor involved in sister chromatid cohesion and fidelity of chromosome transmission. Component of one of the cell nuclear antigen loader complexes, CTF18-replication factor C (CTF18-RFC), which consists of ctf18, ctf8, dcc1, rfc2, rfc3, rfc4 and rfc5. The CTF18-RFC complex binds to single-stranded and primed DNAs and has weak ATPase activity that is stimulated by the presence of primed DNA, replication protein A (RPA) and by proliferating cell nuclear antigen (pcna). The CTF18-RFC complex catalyzes the ATP-dependent loading of pcna onto primed and gapped DNA. The sequence is that of Chromosome transmission fidelity protein 18 homolog (chtf18) from Xenopus laevis (African clawed frog).